Reading from the N-terminus, the 148-residue chain is Transthyretin-like protein 2 (148 aa).

A signal peptide spans 1–17; that stretch reads MSKYAILGLVLVGTVAS. The N-linked (GlcNAc...) asparagine glycan is linked to Asn-77.

This sequence belongs to the nematode transthyretin-like family.

The protein localises to the secreted. The protein is Transthyretin-like protein 2 (ttr-2) of Caenorhabditis elegans.